A 739-amino-acid chain; its full sequence is Nucleoprotein (739 aa).

A coiled-coil region spans residues 334-363 (VNVGEQYQQLREAATEAEKQLQQYAESREL). Disordered stretches follow at residues 414-475 (RPNL…YHDD) and 493-641 (DDNK…DIGQ). Positions 531-546 (SDNNQQSADSEEQGGQ) are enriched in polar residues. Residues 570–579 (TLMDQGDDDP) show a composition bias toward acidic residues. Basic and acidic residues predominate over residues 614 to 624 (AEAHEPPHKSS). Residues 625-634 (NEPAETSQLN) show a composition bias toward polar residues.

It belongs to the filoviruses nucleoprotein family. As to quaternary structure, homooligomer. Homomultimerizes to form the nucleocapsid. Binds to viral genomic RNA. Interacts with VP35 and VP30 to form the nucleocapsid. Interacts with host PPP2R5C; this interaction leads to VP30 dephosphorylation and viral transcription. Interacts with VP24; this interaction facilitates nucleocapsid assembly and genome packaging. Interacts with matrix protein VP40; this interaction allows recruitment of the nucleocapsid into progeny virions. Interacts with host STAU1. Interacts with host NXF1 (via RNA-binding domain); this interaction recruits NXF1 to the inclusion bodies were viral replication takes place, probably to export viral mRNA-NXF1 complexes from these sites. Interacts with host CCDC92; this interaction sequesters NP in the host cytoplasm. Interacts with host TRIM14. Post-translationally, phosphorylated and O-glycosylated by host. Acetylated by host EP300 in vitro.

The protein resides in the virion. It is found in the host cytoplasm. Oligomerizes into helical capsid to encapsidate the viral genome, protecting it from nucleases and the cellular innate immune response. VP35 binds to and stabilizes monomeric NP, keeping it soluble. Upon virus replication, NP is recruited to bind cooperatively viral genomic RNA and VP35 is released. The encapsidated genomic RNA is termed the nucleocapsid and serves as template for transcription and replication. The nucleocapsid is helical with a pitch of 10.81 NP per turn and a diameter of about 22nm. Each NP binds to six nucleotides of viral genomic RNA, three being exposed to the solvant and three hidden into the nucleocapsid. Also recruits host PPP2R5C phosphatase to dephosphorylate VP30 and thereby promote viral transcription. Upon virion assembly and budding, NP binds to VP24 and possibly host STAU1. In Reston ebolavirus (strain Reston-89) (REBOV), this protein is Nucleoprotein (NP).